A 547-amino-acid polypeptide reads, in one-letter code: MASGSSGGGYADEKGPGAATMQALGLQQQHGGGGEVEEESSEMGEKTAARTRLSGLLWHGGSAYDAWFSCASNQVAQVLLTLPYSFAQLGMASGLLFQLFYGLLGSWTAYLISILYLEYRTRKERDKVDFRNHVIQWFEVLDGLLGRHWRNVGLAFNCTFLLFGSVIQLIGCASNIYYINDHLDKRTWTYIFGACCATTVFIPSFHNYRIWSFLGLLMTTYTAWYIAVASLIHGQVEGVAHSGPTSIVLYFTGATNILYTFGGHAVTVEIMHAMWRPQKFKAIYLLATVYVLTLTLPSASAAYWAFGDALLTHSNALALLPRTPWRDAAVVLMLIHQFITFGFACTPLYFVWEKLVGLHGCPSLCKRAAARLPVVLPIWFLAIIFPFFGPINSAVGSLLVSFTVYIIPSLAYMVTFRSPQSRQNAVERPPRFAGGWTGAYVINSFVVAWVLVVGFGFGGWASITNFVHQVDTFGLFAKCYQCPPHPAAAALSPPGAIAPAPASMLPPFNSTAAGIFAAPVPSPAPAPAPMHFVLGHHHHHRHHRHGL.

The Cytoplasmic portion of the chain corresponds to 1-74; it reads MASGSSGGGY…DAWFSCASNQ (74 aa). The chain crosses the membrane as a helical span at residues 75–92; it reads VAQVLLTLPYSFAQLGMA. Topologically, residues 93–94 are extracellular; the sequence is SG. Residues 95-115 traverse the membrane as a helical segment; that stretch reads LLFQLFYGLLGSWTAYLISIL. Residues 116 to 151 are Cytoplasmic-facing; sequence YLEYRTRKERDKVDFRNHVIQWFEVLDGLLGRHWRN. Residues 152 to 172 form a helical membrane-spanning segment; sequence VGLAFNCTFLLFGSVIQLIGC. Topologically, residues 173-187 are extracellular; it reads ASNIYYINDHLDKRT. A helical transmembrane segment spans residues 188-208; it reads WTYIFGACCATTVFIPSFHNY. Residues 209 to 211 lie on the Cytoplasmic side of the membrane; it reads RIW. The chain crosses the membrane as a helical span at residues 212-232; sequence SFLGLLMTTYTAWYIAVASLI. The Extracellular portion of the chain corresponds to 233–247; that stretch reads HGQVEGVAHSGPTSI. The helical transmembrane segment at 248 to 268 threads the bilayer; it reads VLYFTGATNILYTFGGHAVTV. Residues 269-281 lie on the Cytoplasmic side of the membrane; it reads EIMHAMWRPQKFK. A helical membrane pass occupies residues 282-302; that stretch reads AIYLLATVYVLTLTLPSASAA. The Extracellular portion of the chain corresponds to 303-329; sequence YWAFGDALLTHSNALALLPRTPWRDAA. The chain crosses the membrane as a helical span at residues 330–350; it reads VVLMLIHQFITFGFACTPLYF. Over 351–371 the chain is Cytoplasmic; that stretch reads VWEKLVGLHGCPSLCKRAAAR. The helical transmembrane segment at 372–392 threads the bilayer; the sequence is LPVVLPIWFLAIIFPFFGPIN. Position 393 (serine 393) is a topological domain, extracellular. The chain crosses the membrane as a helical span at residues 394–414; sequence AVGSLLVSFTVYIIPSLAYMV. Residues 415 to 440 are Cytoplasmic-facing; that stretch reads TFRSPQSRQNAVERPPRFAGGWTGAY. Residues 441–461 form a helical membrane-spanning segment; that stretch reads VINSFVVAWVLVVGFGFGGWA. Residues 462-547 lie on the Extracellular side of the membrane; that stretch reads SITNFVHQVD…HHHRHHRHGL (86 aa). N-linked (GlcNAc...) asparagine glycosylation occurs at asparagine 509.

The protein belongs to the amino acid/polyamine transporter 2 family. Amino acid/auxin permease (AAAP) (TC 2.A.18.1) subfamily.

The protein localises to the cell membrane. In terms of biological role, carrier protein involved in proton-driven auxin influx. May mediate the formation of auxin gradient from developing leaves (site of auxin biosynthesis) to tips. This is Auxin transporter-like protein 3 from Oryza sativa subsp. japonica (Rice).